The sequence spans 191 residues: Adenylate cyclase CyaB (191 aa).

Residues 9-180 (RFEVEFKYRL…TRSYRTLCEQ (172 aa)) enclose the CYTH domain. Catalysis depends on Y46, which acts as the Proton acceptor.

The protein belongs to the adenylyl cyclase CyaB family.

Its subcellular location is the cytoplasm. The enzyme catalyses ATP = 3',5'-cyclic AMP + diphosphate. Inhibited by GTP. In vitro, CyaB catalyzes the biosynthesis of cyclic AMP (cAMP) from ATP. It seems that under the physiological conditions CyaB has no function in cAMP processes. In vitro, it is also able to hydrolyze substrates such as thiamine triphosphate (ThTP) and inorganic triphosphate (PPPi) at a low rate. It has a slight preference for ThTP over ATP and PPPi in the presence of manganese ions. This PPPase activity is probably not of physiological importance. In Aeromonas hydrophila, this protein is Adenylate cyclase CyaB (cyaB).